The sequence spans 1161 residues: Immunoglobulin superfamily member 3 (1161 aa).

The first 16 residues, 1–16 (MGTAALLILLAGVSWA), serve as a signal peptide directing secretion. The Extracellular portion of the chain corresponds to 17–1091 (QREVAIQPGP…LQSTICANDA (1075 aa)). Ig-like C2-type domains follow at residues 18 to 135 (REVA…AKVN), 140 to 258 (PDTL…WFPL), 272 to 382 (PTDK…RGPS), 402 to 523 (PLRT…WQLL), 541 to 651 (FAVT…RETS), 674 to 796 (PRLQ…EETS), 806 to 930 (PDAN…WYRR), and 947 to 1063 (PQLQ…WYLL). Intrachain disulfides connect cysteine 39–cysteine 117 and cysteine 164–cysteine 242. The EWI motif signature appears at 246-248 (EWI). 6 cysteine pairs are disulfide-bonded: cysteine 298–cysteine 372, cysteine 428–cysteine 507, cysteine 562–cysteine 641, cysteine 697–cysteine 775, cysteine 831–cysteine 914, and cysteine 970–cysteine 1047. Residues 1092–1112 (LFYLVFFYPFPIFGILIITIL) form a helical membrane-spanning segment. At 1113–1161 (LVRFRHRPTGKPGEGKNGVPLLWIKEPHLNYSPTCLEPPVLSIHPGTID) the chain is on the cytoplasmic side.

The protein localises to the membrane. This Xenopus tropicalis (Western clawed frog) protein is Immunoglobulin superfamily member 3 (igsf3).